The primary structure comprises 521 residues: MAENPGLENHRIKSFKNKGRDVETMRRHRNEVTVELRKNKRDEHLLKKRNVPQEESLEDSDVDADFKAQNVTLEAILQNATSDNPVVQLSAVQAARKLLSSDRNPPIDDLIKSGILPILVKCLERDDNPSLQFEAAWALTNIASGTSAQTQAVVQSNAVPLFLRLLHSPHQNVCEQAVWALGNIIGDGPQCRDYVISLGVVKPLLSFINPSIPITFLRNVTWVIVNLCRNKDPPPPMETVQEILPALCVLIYHTDINILVDTVWALSYLTDGGNEQIQMVIDSGVVPFLVPLLSHQEVKVQTAALRAVGNIVTGTDEQTQVVLNCDVLSHFPNLLSHPKEKINKEAVWFLSNITAGNQQQVQAVIDAGLIPMIIHQLAKGDFGTQKEAAWAISNLTISGRKDQVEYLVQQNVIPPFCNLLSVKDSQVVQVVLDGLKNILIMAGDEASTIAEIIEECGGLEKIEVLQQHENEDIYKLAFEIIDQYFSGDDIDEDPSLIPEATQGGTYNFDPTANLQTKEFNF.

Residues 1 to 29 (MAENPGLENHRIKSFKNKGRDVETMRRHR) are disordered. An N-acetylalanine modification is found at alanine 2. Residues 2-58 (AENPGLENHRIKSFKNKGRDVETMRRHRNEVTVELRKNKRDEHLLKKRNVPQEESLE) form the IBB domain. Residues 18 to 29 (KGRDVETMRRHR) are compositionally biased toward basic and acidic residues. Residues 43 to 52 (EHLLKKRNVP) carry the Nuclear localization signal motif. A phosphoserine mark is found at serine 56 and serine 60. The stretch at 66–106 (FKAQNVTLEAILQNATSDNPVVQLSAVQAARKLLSSDRNPP) is one ARM 1; truncated repeat. ARM repeat units lie at residues 107–149 (IDDL…TSAQ), 150–194 (TQAV…CRDY), 195–233 (VISL…NKDP), 234–278 (PPPM…EQIQ), 279–318 (MVID…TDEQ), 319–360 (TQVV…NQQQ), 361–400 (VQAV…ISGR), and 401–443 (KDQV…IMAG). Residues 137 to 229 (WALTNIASGT…VTWVIVNLCR (93 aa)) are NLS binding site (major). The interval 306–394 (RAVGNIVTGT…QKEAAWAISN (89 aa)) is NLS binding site (minor). Residues 447–485 (STIAEIIEECGGLEKIEVLQQHENEDIYKLAFEIIDQYF) form an ARM 10; atypical repeat. Tyrosine 484 carries the phosphotyrosine modification.

This sequence belongs to the importin alpha family. Forms a complex with importin subunit beta-1. Interacts with DDX21. Interacts with NCBP1, NCBP2/CBP20 and NCBP3. Interacts with RCC1. Interacts with ZC3H11A. Detected more or less in all tissues examined (Ehrlich ascites tumor cells, testis, kidney, spleen, liver, heart, lung, thymus, skeletal muscle, cerebellum and brain (without cerebellum)).

The protein resides in the cytoplasm. It localises to the nucleus. In terms of biological role, functions in nuclear protein import as an adapter protein for nuclear receptor KPNB1. Binds specifically and directly to substrates containing either a simple or bipartite NLS motif. Docking of the importin/substrate complex to the nuclear pore complex (NPC) is mediated by KPNB1 through binding to nucleoporin FxFG repeats and the complex is subsequently translocated through the pore by an energy requiring, Ran-dependent mechanism. At the nucleoplasmic side of the NPC, Ran binds to importin-beta and the three components separate and importin-alpha and -beta are re-exported from the nucleus to the cytoplasm where GTP hydrolysis releases Ran from importin. The directionality of nuclear import is thought to be conferred by an asymmetric distribution of the GTP- and GDP-bound forms of Ran between the cytoplasm and nucleus. In vitro, mediates the nuclear import of human cytomegalovirus UL84 by recognizing a non-classical NLS. The chain is Importin subunit alpha-4 (Kpna3) from Mus musculus (Mouse).